We begin with the raw amino-acid sequence, 207 residues long: Holliday junction branch migration complex subunit RuvA (207 aa).

The segment at 1–65 (MYDYIRGTLT…ETEHLLYGFH (65 aa)) is domain I. A domain II region spans residues 66–144 (SREERECFRI…DLLPLDSRVE (79 aa)). The segment at 145–150 (TSQTHT) is flexible linker. The interval 150–207 (TTSSCLEEGIQALAALGYSKIAAERMIAEAIKDLPEGSSLTDILPIALKKNFSGVNKD) is domain III.

This sequence belongs to the RuvA family. Homotetramer. Forms an RuvA(8)-RuvB(12)-Holliday junction (HJ) complex. HJ DNA is sandwiched between 2 RuvA tetramers; dsDNA enters through RuvA and exits via RuvB. An RuvB hexamer assembles on each DNA strand where it exits the tetramer. Each RuvB hexamer is contacted by two RuvA subunits (via domain III) on 2 adjacent RuvB subunits; this complex drives branch migration. In the full resolvosome a probable DNA-RuvA(4)-RuvB(12)-RuvC(2) complex forms which resolves the HJ.

It localises to the cytoplasm. The RuvA-RuvB-RuvC complex processes Holliday junction (HJ) DNA during genetic recombination and DNA repair, while the RuvA-RuvB complex plays an important role in the rescue of blocked DNA replication forks via replication fork reversal (RFR). RuvA specifically binds to HJ cruciform DNA, conferring on it an open structure. The RuvB hexamer acts as an ATP-dependent pump, pulling dsDNA into and through the RuvAB complex. HJ branch migration allows RuvC to scan DNA until it finds its consensus sequence, where it cleaves and resolves the cruciform DNA. The polypeptide is Holliday junction branch migration complex subunit RuvA (Chlamydia pneumoniae (Chlamydophila pneumoniae)).